A 448-amino-acid chain; its full sequence is MAKHRYLPMTEQDEKEMLDVIGVKSIDDLFQDIPEKIRFKRDYDLKPAKSEPALLRELSKLASKNANTTEYASFLGAGVYSHYIPTVVDHVISRSEFYTAYTPYQPEISQGELQAIFEFQTMIAELTGMDLANSSMYDGGTALAEAAMLASGHTKRKKILISGAVHPESSNVLKTYATGQHIEVEVIPELDGKTDIEALKKALSDDIAGFVVQYPNFYGQVEPLAELEKLVHENNSLLLVSSNPLSLGLLTPPGEFGADIVVGDSQVFGIPESFGGPHCGFFAVTNKLMRKVPGRLVGETVDENGKRGYVLTLQAREQHIRRDKATSNICSNQALNALASSVAMATLGKTGLVEMAKQNLDKSHYAKQKFREKGFEVLFSDGFFNEFVVKLSKPIKEVNESLLDEGIIGGYDLGFYEEKYKHHMLVAVTEMRTKEEIDAFVASLEGAK.

The protein belongs to the GcvP family. N-terminal subunit subfamily. As to quaternary structure, the glycine cleavage system is composed of four proteins: P, T, L and H. In this organism, the P 'protein' is a heterodimer of two subunits.

It catalyses the reaction N(6)-[(R)-lipoyl]-L-lysyl-[glycine-cleavage complex H protein] + glycine + H(+) = N(6)-[(R)-S(8)-aminomethyldihydrolipoyl]-L-lysyl-[glycine-cleavage complex H protein] + CO2. The glycine cleavage system catalyzes the degradation of glycine. The P protein binds the alpha-amino group of glycine through its pyridoxal phosphate cofactor; CO(2) is released and the remaining methylamine moiety is then transferred to the lipoamide cofactor of the H protein. The chain is Probable glycine dehydrogenase (decarboxylating) subunit 1 from Listeria monocytogenes serotype 4a (strain HCC23).